Here is a 372-residue protein sequence, read N- to C-terminus: Chaperone protein DnaJ (372 aa).

The region spanning 5–70 is the J domain; sequence DYYDLLEVGR…EKRAGYDRYG (66 aa). The CR-type zinc finger occupies 134-212; that stretch reads GIQAPIHYVT…CGGSGRRRDE (79 aa). Zn(2+)-binding residues include C147, C150, C164, C167, C186, C189, C200, and C203. CXXCXGXG motif repeat units lie at residues 147–154, 164–171, 186–193, and 200–207; these read CDTCQGTG, CHTCQGSG, CTTCYGEG, and CKKCGGSG.

It belongs to the DnaJ family. As to quaternary structure, homodimer. Requires Zn(2+) as cofactor.

The protein resides in the cytoplasm. Participates actively in the response to hyperosmotic and heat shock by preventing the aggregation of stress-denatured proteins and by disaggregating proteins, also in an autonomous, DnaK-independent fashion. Unfolded proteins bind initially to DnaJ; upon interaction with the DnaJ-bound protein, DnaK hydrolyzes its bound ATP, resulting in the formation of a stable complex. GrpE releases ADP from DnaK; ATP binding to DnaK triggers the release of the substrate protein, thus completing the reaction cycle. Several rounds of ATP-dependent interactions between DnaJ, DnaK and GrpE are required for fully efficient folding. Also involved, together with DnaK and GrpE, in the DNA replication of plasmids through activation of initiation proteins. In Wolbachia sp. subsp. Drosophila simulans (strain wRi), this protein is Chaperone protein DnaJ.